The following is a 137-amino-acid chain: Nucleoside diphosphate kinase (137 aa).

K10, F58, R86, T92, R103, and N113 together coordinate ATP. The active-site Pros-phosphohistidine intermediate is the H116.

This sequence belongs to the NDK family. Homotetramer. The cofactor is Mg(2+).

The protein localises to the cytoplasm. The catalysed reaction is a 2'-deoxyribonucleoside 5'-diphosphate + ATP = a 2'-deoxyribonucleoside 5'-triphosphate + ADP. The enzyme catalyses a ribonucleoside 5'-diphosphate + ATP = a ribonucleoside 5'-triphosphate + ADP. Its function is as follows. Major role in the synthesis of nucleoside triphosphates other than ATP. The ATP gamma phosphate is transferred to the NDP beta phosphate via a ping-pong mechanism, using a phosphorylated active-site intermediate. In Helicobacter pylori (strain P12), this protein is Nucleoside diphosphate kinase.